Consider the following 434-residue polypeptide: Glutamate-1-semialdehyde 2,1-aminomutase (434 aa).

Lysine 274 carries the post-translational modification N6-(pyridoxal phosphate)lysine.

It belongs to the class-III pyridoxal-phosphate-dependent aminotransferase family. HemL subfamily. As to quaternary structure, homodimer. Requires pyridoxal 5'-phosphate as cofactor.

It localises to the cytoplasm. It catalyses the reaction (S)-4-amino-5-oxopentanoate = 5-aminolevulinate. The protein operates within porphyrin-containing compound metabolism; protoporphyrin-IX biosynthesis; 5-aminolevulinate from L-glutamyl-tRNA(Glu): step 2/2. The chain is Glutamate-1-semialdehyde 2,1-aminomutase from Acidovorax sp. (strain JS42).